Here is a 238-residue protein sequence, read N- to C-terminus: Large ribosomal subunit protein uL2 (238 aa).

The interval 199–238 is disordered; that stretch reads PHGGGLHQSVSRPSTVSRNAPPGRKVGHIAARRTGRKEGA. The span at 206–216 shows a compositional bias: polar residues; the sequence is QSVSRPSTVSR. A compositionally biased stretch (basic residues) spans 223–238; it reads KVGHIAARRTGRKEGA.

Belongs to the universal ribosomal protein uL2 family. As to quaternary structure, part of the 50S ribosomal subunit. Forms a bridge to the 30S subunit in the 70S ribosome.

One of the primary rRNA binding proteins. Required for association of the 30S and 50S subunits to form the 70S ribosome, for tRNA binding and peptide bond formation. It has been suggested to have peptidyltransferase activity; this is somewhat controversial. Makes several contacts with the 16S rRNA in the 70S ribosome. The polypeptide is Large ribosomal subunit protein uL2 (Sulfurisphaera tokodaii (strain DSM 16993 / JCM 10545 / NBRC 100140 / 7) (Sulfolobus tokodaii)).